Consider the following 95-residue polypeptide: Large ribosomal subunit protein uL23 (95 aa).

This sequence belongs to the universal ribosomal protein uL23 family. In terms of assembly, part of the 50S ribosomal subunit. Contacts protein L29, and trigger factor when it is bound to the ribosome.

Functionally, one of the early assembly proteins it binds 23S rRNA. One of the proteins that surrounds the polypeptide exit tunnel on the outside of the ribosome. Forms the main docking site for trigger factor binding to the ribosome. This chain is Large ribosomal subunit protein uL23, found in Pediococcus pentosaceus (strain ATCC 25745 / CCUG 21536 / LMG 10740 / 183-1w).